Here is a 138-residue protein sequence, read N- to C-terminus: Large ribosomal subunit protein uL16 (138 aa).

The protein belongs to the universal ribosomal protein uL16 family. As to quaternary structure, part of the 50S ribosomal subunit.

Its function is as follows. Binds 23S rRNA and is also seen to make contacts with the A and possibly P site tRNAs. This chain is Large ribosomal subunit protein uL16, found in Gluconobacter oxydans (strain 621H) (Gluconobacter suboxydans).